We begin with the raw amino-acid sequence, 284 residues long: Tropomyosin (284 aa).

Residues 1 to 284 (MDAIKKKMVA…DATFAELAGY (284 aa)) are a coiled coil. Residues 32 to 41 (TEEAKAKIED) show a composition bias toward basic and acidic residues. Residues 32-60 (TEEAKAKIEDDYNSLQKKSIQTENDLDNT) are disordered. The segment covering 44-60 (NSLQKKSIQTENDLDNT) has biased composition (polar residues).

Belongs to the tropomyosin family. Homodimer.

In terms of biological role, tropomyosin, in association with the troponin complex, plays a central role in the calcium dependent regulation of muscle contraction. The chain is Tropomyosin from Mytilus edulis (Blue mussel).